A 163-amino-acid chain; its full sequence is Troponin C, skeletal muscle (163 aa).

Blocked amino end (Ala) is present on alanine 2. EF-hand domains are found at residues 18 to 53 (EMIA…LGQN), 54 to 89 (PTKE…QMKE), 94 to 129 (KSEE…TGEH), and 130 to 163 (VTEE…EGVQ). Residues aspartate 31, aspartate 33, aspartate 37, glutamate 42, aspartate 67, aspartate 69, serine 71, threonine 73, glutamate 78, aspartate 107, asparagine 109, aspartate 111, glutamate 118, aspartate 143, asparagine 145, aspartate 147, arginine 149, and glutamate 154 each coordinate Ca(2+).

It belongs to the troponin C family.

In terms of biological role, troponin is the central regulatory protein of striated muscle contraction. Tn consists of three components: Tn-I which is the inhibitor of actomyosin ATPase, Tn-T which contains the binding site for tropomyosin and Tn-C. The binding of calcium to Tn-C abolishes the inhibitory action of Tn on actin filaments. The sequence is that of Troponin C, skeletal muscle (TNNC2) from Gallus gallus (Chicken).